A 432-amino-acid chain; its full sequence is Adhesin YadA (432 aa).

Residues 1–25 form the signal peptide; the sequence is MTKDFKISVSAALISALFSSPYAFA. The tract at residues 26 to 340 is surface exposed passenger domain; it reads EEPEDGNDGI…KKAISESNQY (315 aa). The stretch at 242–263 forms a coiled coil; sequence VNVAQLKKEMAETLENARKETL. The segment at 341–379 is outer membrane translocation of the passenger domain; sequence TDHKFSQLDNRLDKLDKRVDKGLASSAALNSLFQPYGVG. 4 beta stranded membrane passes run 379 to 389, 393 to 404, 411 to 417, and 421 to 432; these read GKVNFTAGVGG, SQALAIGSGYRV, KAGVAYA, and NVMYNASFNIEW. Residues 380–432 form a translocator domain region; sequence KVNFTAGVGGYRSSQALAIGSGYRVNESVALKAGVAYAGSSNVMYNASFNIEW.

It belongs to the autotransporter-2 (AT-2) (TC 1.B.40) family. In terms of assembly, homotrimer.

Its subcellular location is the cell surface. The protein resides in the cell outer membrane. Functionally, collagen-binding outer membrane protein forming a fibrillar matrix on the bacterial cell surface. Promotes attachment to eukaryotic cells and after invasion, is the major adhesin in infected tissue. Constitutes an alternative uptake pathway under conditions in which invasin synthesis is repressed. The protein is Adhesin YadA (yadA) of Yersinia pseudotuberculosis serotype I (strain IP32953).